We begin with the raw amino-acid sequence, 189 residues long: uncharacterized protein (189 aa).

This sequence belongs to the flavoredoxin family. FMN serves as cofactor.

This is an uncharacterized protein from Escherichia coli (strain K12).